The chain runs to 154 residues: Endoribonuclease YbeY (154 aa).

3 residues coordinate Zn(2+): His120, His124, and His130.

The protein belongs to the endoribonuclease YbeY family. It depends on Zn(2+) as a cofactor.

The protein resides in the cytoplasm. Its function is as follows. Single strand-specific metallo-endoribonuclease involved in late-stage 70S ribosome quality control and in maturation of the 3' terminus of the 16S rRNA. The chain is Endoribonuclease YbeY from Leptospira biflexa serovar Patoc (strain Patoc 1 / Ames).